Reading from the N-terminus, the 195-residue chain is Large ribosomal subunit protein eL18 (195 aa).

Lysine 126 participates in a covalent cross-link: Glycyl lysine isopeptide (Lys-Gly) (interchain with G-Cter in SUMO2). Serine 137 carries the post-translational modification Phosphoserine. The interval 158-195 is disordered; sequence HFGKAPGTPHSHTKPYVRSKGRKFERARGRRASRGYKN. Threonine 165 bears the Phosphothreonine mark. Basic residues-rich tracts occupy residues 168–178 and 185–195; these read SHTKPYVRSKG and RGRRASRGYKN. A Glycyl lysine isopeptide (Lys-Gly) (interchain with G-Cter in SUMO2) cross-link involves residue lysine 171.

The protein belongs to the eukaryotic ribosomal protein eL18 family. In terms of assembly, component of the large ribosomal subunit.

It localises to the cytoplasm. The protein localises to the cytosol. Its subcellular location is the rough endoplasmic reticulum. In terms of biological role, component of the large ribosomal subunit. The sequence is that of Large ribosomal subunit protein eL18 (RPL18) from Sus scrofa (Pig).